We begin with the raw amino-acid sequence, 625 residues long: tRNA uridine 5-carboxymethylaminomethyl modification enzyme MnmG (625 aa).

Gly-11–Gly-16 is a binding site for FAD. Gly-271–Phe-285 serves as a coordination point for NAD(+).

It belongs to the MnmG family. As to quaternary structure, homodimer. Heterotetramer of two MnmE and two MnmG subunits. FAD is required as a cofactor.

The protein resides in the cytoplasm. NAD-binding protein involved in the addition of a carboxymethylaminomethyl (cmnm) group at the wobble position (U34) of certain tRNAs, forming tRNA-cmnm(5)s(2)U34. This chain is tRNA uridine 5-carboxymethylaminomethyl modification enzyme MnmG, found in Parabacteroides distasonis (strain ATCC 8503 / DSM 20701 / CIP 104284 / JCM 5825 / NCTC 11152).